Reading from the N-terminus, the 443-residue chain is Putative metabolite transport protein YaaU (443 aa).

Residues 1–18 (MQPSRNFDDLKFSSIHRR) are Cytoplasmic-facing. A helical transmembrane segment spans residues 19–39 (ILLWGSGGPFLDGYVLVMIGV). Residues 40–53 (ALEQLTPALKLDAD) are Periplasmic-facing. A helical transmembrane segment spans residues 54–74 (WIGLLGAGTLAGLFVGTSLFG). Over 75–84 (YISDKVGRRK) the chain is Cytoplasmic. A helical membrane pass occupies residues 85–105 (MFLIDIIAIGVISVATMFVSS). Residues 106–113 (PVELLVMR) lie on the Periplasmic side of the membrane. A helical membrane pass occupies residues 114–134 (VLIGIVIGADYPIATSMITEF). Residues 135 to 145 (SSTRQRAFSIS) are Cytoplasmic-facing. A helical membrane pass occupies residues 146–166 (FIAAMWYVGATCADLVGYWLY). Residues 167–173 (DVEGGWR) are Periplasmic-facing. Residues 174-194 (WMLGSAAIPCLLILIGRFELP) traverse the membrane as a helical segment. The Cytoplasmic segment spans residues 195–241 (ESPRWLLRKGRVKECEEMMIKLFGEPVAFDEEQPQQTRFRDLFNRRH). A helical transmembrane segment spans residues 242 to 262 (FPFVLFVAAIWTCQVIPMFAI). Over 263–282 (YTFGPQIVGLLGLGVGKNAA) the chain is Periplasmic. The chain crosses the membrane as a helical span at residues 283–303 (LGNVVISLFFMLGCIPPMLWL). Topologically, residues 304–309 (NTAGRR) are cytoplasmic. A helical transmembrane segment spans residues 310–329 (PLLIGSFAMMTLALAVLGLI). At 330–334 (PDMGI) the chain is on the periplasmic side. A helical membrane pass occupies residues 335-357 (WLVVMAFAVYAFFSGGPGNLQWL). Residues 358–373 (YPNELFPTDIRASAVG) are Cytoplasmic-facing. Residues 374–394 (VIMSLSRIGTIVSTWALPIFI) traverse the membrane as a helical segment. At 395–401 (NNYGISN) the chain is on the periplasmic side. Residues 402-422 (TMLMGAGISLFGLLISVAFAP) form a helical membrane-spanning segment. The Cytoplasmic portion of the chain corresponds to 423–443 (ETRGMSLAQTSNMTIRGQRMG).

This sequence belongs to the major facilitator superfamily. Sugar transporter (TC 2.A.1.1) family.

Its subcellular location is the cell inner membrane. The polypeptide is Putative metabolite transport protein YaaU (yaaU) (Escherichia coli (strain K12)).